The following is a 201-amino-acid chain: Outer-membrane lipoprotein carrier protein (201 aa).

The first 21 residues, 1–21 (MKKVLLTVCAIALFGSQAAWA), serve as a signal peptide directing secretion.

The protein belongs to the LolA family. Monomer.

The protein resides in the periplasm. Functionally, participates in the translocation of lipoproteins from the inner membrane to the outer membrane. Only forms a complex with a lipoprotein if the residue after the N-terminal Cys is not an aspartate (The Asp acts as a targeting signal to indicate that the lipoprotein should stay in the inner membrane). The protein is Outer-membrane lipoprotein carrier protein of Proteus mirabilis (strain HI4320).